The chain runs to 373 residues: Protein MGF 360-6L (373 aa).

The protein belongs to the asfivirus MGF 360 family.

Its function is as follows. Plays a role in virus cell tropism, and may be required for efficient virus replication in macrophages. In Ornithodoros (relapsing fever ticks), this protein is Protein MGF 360-6L.